Reading from the N-terminus, the 48-residue chain is Small, acid-soluble spore protein N (48 aa).

The interval 1–48 (MMGREHDKQAQFTPDHLGTKPVAYKRNKGKKMHNKSNEQPDVIQTKGE) is disordered. Basic residues predominate over residues 23–34 (AYKRNKGKKMHN).

It belongs to the SspN family.

Its subcellular location is the spore core. This Bacillus pumilus (strain SAFR-032) protein is Small, acid-soluble spore protein N.